We begin with the raw amino-acid sequence, 453 residues long: Dihydrolipoyllysine-residue succinyltransferase component of 2-oxoglutarate dehydrogenase complex, mitochondrial (453 aa).

A mitochondrion-targeting transit peptide spans methionine 1 to lysine 67. In terms of domain architecture, Lipoyl-binding spans leucine 70–arginine 144. The residue at position 81 (serine 81) is a Phosphoserine. Position 110 is an N6-lipoyllysine (lysine 110). Low complexity predominate over residues lysine 152–alanine 172. Residues lysine 152–glutamate 225 form a disordered region. Lysine 154 is modified (N6-acetyllysine). The segment covering valine 173–glycine 196 has biased composition (pro residues). Lysine 267, lysine 272, lysine 273, lysine 277, and lysine 307 each carry N6-acetyllysine. Active-site residues include histidine 424 and aspartate 428.

The protein belongs to the 2-oxoacid dehydrogenase family. As to quaternary structure, the 2-oxoglutarate dehydrogenase complex is composed of OGDH (2-oxoglutarate dehydrogenase; E1), DLST (dihydrolipoamide succinyltransferase; E2), DLD (dihydrolipoamide dehydrogenase; E3) and the assembly factor KGD4. It contains multiple copies of the three enzymatic components (E1, E2 and E3). In the nucleus, the 2-oxoglutarate dehydrogenase complex associates with KAT2A. Interacts with ABHD11; this interaction maintains the functional lipoylation of the 2-oxoglutarate dehydrogenase complex. It depends on (R)-lipoate as a cofactor.

Its subcellular location is the mitochondrion matrix. The protein resides in the nucleus. The enzyme catalyses N(6)-[(R)-dihydrolipoyl]-L-lysyl-[protein] + succinyl-CoA = N(6)-[(R)-S(8)-succinyldihydrolipoyl]-L-lysyl-[protein] + CoA. The protein operates within amino-acid degradation; L-lysine degradation via saccharopine pathway; glutaryl-CoA from L-lysine: step 6/6. Its pathway is carbohydrate metabolism; tricarboxylic acid cycle. Dihydrolipoamide succinyltransferase (E2) component of the 2-oxoglutarate dehydrogenase complex. The 2-oxoglutarate dehydrogenase complex catalyzes the overall conversion of 2-oxoglutarate to succinyl-CoA and CO(2). The 2-oxoglutarate dehydrogenase complex is mainly active in the mitochondrion. A fraction of the 2-oxoglutarate dehydrogenase complex also localizes in the nucleus and is required for lysine succinylation of histones: associates with KAT2A on chromatin and provides succinyl-CoA to histone succinyltransferase KAT2A. The polypeptide is Dihydrolipoyllysine-residue succinyltransferase component of 2-oxoglutarate dehydrogenase complex, mitochondrial (Homo sapiens (Human)).